Consider the following 325-residue polypeptide: Serine/threonine-protein kinase CtkA (325 aa).

Residues 21 to 24 (NGNK), K37, Q72, and 88 to 90 (KDF) contribute to the ATP site. The Mg(2+) site is built by N160 and D179. Residue D179 coordinates ATP. The disordered stretch occupies residues 296 to 325 (QHKQAHSNPYDNADDLDNSNEYTPTPKRRR).

In terms of processing, autophosphorylates on either Thr-3 or Thr-7.

It localises to the secreted. The protein localises to the host cytoplasm. It is found in the host cytosol. Its subcellular location is the host nucleus. It catalyses the reaction L-seryl-[protein] + ATP = O-phospho-L-seryl-[protein] + ADP + H(+). The enzyme catalyses L-threonyl-[protein] + ATP = O-phospho-L-threonyl-[protein] + ADP + H(+). In terms of biological role, virulence factor acting as a pro-inflammatory protein that induces the secretion of the pro-inflammatory cytokines TNF-alpha (tumor necrosis factor-alpha) and IL-8 (interleukin-8) from human macrophages, as well as enhanced translocation of the transcription factor NF-kappa-B complex in macrophages. Is a kinase capable of autophosphorylating itself at a threonine residue near the N-terminus. Also leads to enhanced phosphorylation of the NF-kappa-B p65 subunit (RELA) at 'Ser-276' in human epithelial cancer cells; its kinase activity is required for this enhanced phosphorylation that up-regulates NF-kappa-B activity, but it does not directly phosphorylate this protein. Thus, the kinase activity of CtkA may play an important role in the induction of host inflammatory responses during H.pylori infection. This is Serine/threonine-protein kinase CtkA (ctkA) from Helicobacter pylori (strain J99 / ATCC 700824) (Campylobacter pylori J99).